The sequence spans 130 residues: NADH-ubiquinone oxidoreductase chain 1 (130 aa).

Residues 45-65 (SILFMSLFSVMFCLVVYSYLW) form a helical membrane-spanning segment.

Belongs to the complex I subunit 1 family.

It localises to the mitochondrion inner membrane. It catalyses the reaction a ubiquinone + NADH + 5 H(+)(in) = a ubiquinol + NAD(+) + 4 H(+)(out). In terms of biological role, core subunit of the mitochondrial membrane respiratory chain NADH dehydrogenase (Complex I) that is believed to belong to the minimal assembly required for catalysis. Complex I functions in the transfer of electrons from NADH to the respiratory chain. The immediate electron acceptor for the enzyme is believed to be ubiquinone. The sequence is that of NADH-ubiquinone oxidoreductase chain 1 (ND1) from Artemia salina (Brine shrimp).